The chain runs to 427 residues: MSVKWEKQEGNEGVLTVTVPAEEVNAGLDKAFKKVVKQVNVPGFRKGKMPRPMFEQRFGVEALYQDALDFILPDAYAAAVEEAGINPVDRPEIDIEQMEKGKELIFTAKVTVEPEVELGDYKGLEVEKEDTEVTEEDLNKAIEADLARKAELVVKEEGEVAEGDVVNLDFDGYVNEEAFEGGKAEGYDLEIGSGQFIPGFEEQLVGTKVGDEKDVTVTFPEEYHAEELAGKEAVFKVKINEVKSKEVPELDDEMAKELDESVDSVDAYKEKYKKDLQEQKTLQAENNMKESLIAQAVENAKVDIPEAMINTELDRMMQEFEQRIAQQGLNLELYYQFSGQTEEQLKESMKADAEARVKTNLTLAAIAKAENIEISDTDVDAELSKMSEQFGLSVDDIKAALGNGEVLKDDLRIQKAIDVLVKESKEK.

The PPIase FKBP-type domain occupies 163 to 248; the sequence is GDVVNLDFDG…INEVKSKEVP (86 aa).

It belongs to the FKBP-type PPIase family. Tig subfamily.

It localises to the cytoplasm. The catalysed reaction is [protein]-peptidylproline (omega=180) = [protein]-peptidylproline (omega=0). Its function is as follows. Involved in protein export. Acts as a chaperone by maintaining the newly synthesized protein in an open conformation. Functions as a peptidyl-prolyl cis-trans isomerase. The sequence is that of Trigger factor from Macrococcus caseolyticus (strain JCSC5402) (Macrococcoides caseolyticum).